A 601-amino-acid chain; its full sequence is Elongation factor 4 (601 aa).

Residues 5–187 (IRKKNFCIIA…AICKHVPSPR (183 aa)) form the tr-type G domain. GTP is bound by residues 17–22 (DHGKST) and 134–137 (NKID).

Belongs to the TRAFAC class translation factor GTPase superfamily. Classic translation factor GTPase family. LepA subfamily.

It localises to the cell inner membrane. The enzyme catalyses GTP + H2O = GDP + phosphate + H(+). In terms of biological role, required for accurate and efficient protein synthesis under certain stress conditions. May act as a fidelity factor of the translation reaction, by catalyzing a one-codon backward translocation of tRNAs on improperly translocated ribosomes. Back-translocation proceeds from a post-translocation (POST) complex to a pre-translocation (PRE) complex, thus giving elongation factor G a second chance to translocate the tRNAs correctly. Binds to ribosomes in a GTP-dependent manner. The sequence is that of Elongation factor 4 from Borrelia garinii subsp. bavariensis (strain ATCC BAA-2496 / DSM 23469 / PBi) (Borreliella bavariensis).